The chain runs to 630 residues: Chaperone protein HtpG (630 aa).

Positions Met1–Arg336 are a; substrate-binding. A b region spans residues Glu337 to Lys551. Residues Ile552–Gly630 form a c region.

Belongs to the heat shock protein 90 family. In terms of assembly, homodimer.

It is found in the cytoplasm. In terms of biological role, molecular chaperone. Has ATPase activity. This Rhizobium etli (strain ATCC 51251 / DSM 11541 / JCM 21823 / NBRC 15573 / CFN 42) protein is Chaperone protein HtpG.